Consider the following 91-residue polypeptide: Transcription factor ILI3 (91 aa).

The bHLH domain occupies 3–58; it reads SRRGGGGGGGRITDEEINELISKLQALLPESSRSRGASRSSASKLLKETCSYIKSL.

It belongs to the bHLH protein family.

Atypical and probable non DNA-binding bHLH transcription that integrates multiple signaling pathways to regulate cell elongation and plant development. This chain is Transcription factor ILI3 (ILI3), found in Oryza sativa subsp. indica (Rice).